A 192-amino-acid chain; its full sequence is Transmembrane protein 11, mitochondrial (192 aa).

The disordered stretch occupies residues 1 to 20; the sequence is MAAWGRRRLGPGSSGGSARE. 2 helical membrane passes run 84 to 100 and 107 to 124; these read TAVL…LALP and ISLP…LYGI.

Belongs to the TMEM11 family. As to quaternary structure, associates with the mitochondrial contact site and cristae organizing system (MICOS) complex, composed of at least MICOS10/MIC10, CHCHD3/MIC19, CHCHD6/MIC25, APOOL/MIC27, IMMT/MIC60, APOO/MIC23/MIC26 and QIL1/MIC13. This complex was also known under the names MINOS or MitOS complex. The MICOS complex associates with mitochondrial outer membrane proteins SAMM50, MTX1, MTX2 and DNAJC11, mitochondrial inner membrane protein TMEM11 and with HSPA9. Interacts with IMMT/MIC60.

It localises to the mitochondrion inner membrane. Plays a role in mitochondrial morphogenesis. The chain is Transmembrane protein 11, mitochondrial (TMEM11) from Homo sapiens (Human).